A 421-amino-acid polypeptide reads, in one-letter code: Signal recognition particle receptor FtsY (421 aa).

The span at 1–10 shows a compositional bias: basic residues; it reads MFSFFRRKKK. Residues 1 to 22 are disordered; the sequence is MFSFFRRKKKQETPAPEEAQIQ. GTP-binding positions include 228 to 235, 309 to 313, and 373 to 376; these read GINGAGKT, DTAGR, and TKLD.

The protein belongs to the GTP-binding SRP family. FtsY subfamily. Part of the signal recognition particle protein translocation system, which is composed of SRP and FtsY. SRP is a ribonucleoprotein composed of Ffh and a 4.5S RNA molecule.

The protein localises to the cell membrane. It is found in the cytoplasm. It carries out the reaction GTP + H2O = GDP + phosphate + H(+). In terms of biological role, involved in targeting and insertion of nascent membrane proteins into the cytoplasmic membrane. Acts as a receptor for the complex formed by the signal recognition particle (SRP) and the ribosome-nascent chain (RNC). Interaction with SRP-RNC leads to the transfer of the RNC complex to the Sec translocase for insertion into the membrane, the hydrolysis of GTP by both Ffh and FtsY, and the dissociation of the SRP-FtsY complex into the individual components. This Neisseria meningitidis serogroup C protein is Signal recognition particle receptor FtsY.